The chain runs to 214 residues: uncharacterized protein (214 aa).

The next 5 helical transmembrane spans lie at Leu18–Val38, Asp51–Gly71, Ile80–Val100, Leu108–Val128, and Phe145–Ile165.

The protein localises to the cell membrane. This is an uncharacterized protein from Geobacillus stearothermophilus (Bacillus stearothermophilus).